The primary structure comprises 1215 residues: Homeodomain-interacting protein kinase 3 (1215 aa).

Lys-27 participates in a covalent cross-link: Glycyl lysine isopeptide (Lys-Gly) (interchain with G-Cter in SUMO2). Residues 197–525 enclose the Protein kinase domain; the sequence is YEVLDFLGRG…PAETLNHPFV (329 aa). ATP is bound by residues 203–211 and Lys-226; that span reads LGRGTFGQV. Asp-322 acts as the Proton acceptor in catalysis. At Tyr-359 the chain carries Phosphotyrosine. The tract at residues 767 to 944 is interaction with AR; it reads QNRGILVKLM…NSMSDEEQES (178 aa). Positions 796 to 891 are interaction with FAS; the sequence is NTNIPHSAFI…SQRHSLRECK (96 aa). Residues 855-1011 are required for localization to nuclear speckles; sequence QTIIIADSPS…ENGLNADEHM (157 aa). Residues 866–918 form an SUMO interaction motifs (SIM); required for nuclear localization and kinase activity region; sequence AVSVITISSDTDEEETSQRHSLRECKGSLDCEACQSTLNIDRMCSLSSPDSTL. The interval 870–880 is interaction with UBL1; it reads ITISSDTDEEE. Positions 912-929 are enriched in low complexity; sequence SSPDSTLSTSSSGQSSPS. Residues 912–987 are disordered; that stretch reads SSPDSTLSTS…ELVSSADTET (76 aa). Polar residues predominate over residues 945–957; the sequence is SCDTVDGSPTSDS. Lys-1208 is covalently cross-linked (Glycyl lysine isopeptide (Lys-Gly) (interchain with G-Cter in SUMO)).

The protein belongs to the protein kinase superfamily. CMGC Ser/Thr protein kinase family. HIPK subfamily. Interacts with Nkx1-2. Interacts with FAS and DAXX. Probably part of a complex consisting of HIPK3, FAS and FADD. Interacts with and stabilizes ligand-bound androgen receptor (AR). Interacts with UBL1/SUMO-1. Binds to NR5A1/SF1, SPEN/MINT and RUNX2. In terms of processing, autophosphorylated, but autophosphorylation is not required for catalytic activity. May be sumoylated. In terms of tissue distribution, overexpressed in multidrug resistant cells. Highly expressed in heart and skeletal muscle, and at lower levels in placenta, pancreas, brain, spleen, prostate, thymus, testis, small intestine, colon and leukocytes. Not found in liver and lung.

It localises to the cytoplasm. The protein localises to the nucleus. The enzyme catalyses L-seryl-[protein] + ATP = O-phospho-L-seryl-[protein] + ADP + H(+). It carries out the reaction L-threonyl-[protein] + ATP = O-phospho-L-threonyl-[protein] + ADP + H(+). In terms of biological role, serine/threonine-protein kinase involved in transcription regulation, apoptosis and steroidogenic gene expression. Phosphorylates JUN and RUNX2. Seems to negatively regulate apoptosis by promoting FADD phosphorylation. Enhances androgen receptor-mediated transcription. May act as a transcriptional corepressor for NK homeodomain transcription factors. The phosphorylation of NR5A1 activates SF1 leading to increased steroidogenic gene expression upon cAMP signaling pathway stimulation. In osteoblasts, supports transcription activation: phosphorylates RUNX2 that synergizes with SPEN/MINT to enhance FGFR2-mediated activation of the osteocalcin FGF-responsive element (OCFRE). In Homo sapiens (Human), this protein is Homeodomain-interacting protein kinase 3 (HIPK3).